A 771-amino-acid chain; its full sequence is Probable exo-1,4-beta-xylosidase xlnD (771 aa).

The N-terminal stretch at 1–25 (MARIMSWHYGKAITLFVCLGPVALS) is a signal peptide. An N-linked (GlcNAc...) asparagine glycan is attached at asparagine 67. Aspartate 293 is an active-site residue. 4 N-linked (GlcNAc...) asparagine glycosylation sites follow: asparagine 305, asparagine 345, asparagine 423, and asparagine 464.

Belongs to the glycosyl hydrolase 3 family.

The protein localises to the secreted. It catalyses the reaction Hydrolysis of (1-&gt;4)-beta-D-xylans, to remove successive D-xylose residues from the non-reducing termini.. It functions in the pathway glycan degradation; xylan degradation. In terms of biological role, xylan 1,4-beta-xylosidase involved in the hydrolysis of xylan, a major structural heterogeneous polysaccharide found in plant biomass representing the second most abundant polysaccharide in the biosphere, after cellulose. This Neosartorya fischeri (strain ATCC 1020 / DSM 3700 / CBS 544.65 / FGSC A1164 / JCM 1740 / NRRL 181 / WB 181) (Aspergillus fischerianus) protein is Probable exo-1,4-beta-xylosidase xlnD (xlnD).